Here is a 105-residue protein sequence, read N- to C-terminus: Anti-sigma factor RsrA (105 aa).

Residues Cys-11, His-37, Cys-41, and Cys-44 each contribute to the Zn(2+) site. Cys-11 and Cys-44 are oxidised to a cystine. The segment at 33–47 is contributes to redox-sensitivity; that stretch reads KFEHHFEECSPCLEK. The segment at 86-105 is disordered; it reads QSVPEHDVAAAPSSSAPQES. Residues 94 to 105 show a composition bias toward low complexity; it reads AAAPSSSAPQES.

This sequence belongs to the zinc-associated anti-sigma factor (ZAS) superfamily. As to quaternary structure, interacts with cognate sigma factor SigR under reducing but not oxiding conditions. Treatment with the thiol-oxidzing agent diamide inhibits the interaction, while incubation with thioredoxin (trxA) stimulates the interaction. Zn(2+) serves as cofactor. In terms of processing, under oxidizing conditions up to 3 disulfide bonds are formed. A single disulfide bond inhibits binding to SigR. Cys-11 forms a disulfide bond with either Cys-44 (the major bind) or Cys-41 (a minor bond).

Its function is as follows. A redox-regulated anti-sigma factor for extracytoplasmic function (ECF) sigma factor SigR, and a key sensor of disulfide stress. Holds SigR, its cognate ECF sigma factor, in an inactive form, inhibiting its sigma activity under reducing but not oxidizing conditions; oxidation and reduction of the anti-sigma factor is reversible. Mycothiol (MSH) is competent for reduction of RsrA, allowing it to bind to SigR. In conjunction with its cognate sigma factor SigR may sense the intracellular level of reduced MSH. Probably releases SigR during oxidative stress. This Streptomyces coelicolor (strain ATCC BAA-471 / A3(2) / M145) protein is Anti-sigma factor RsrA (rsrA).